The chain runs to 348 residues: Succinylglutamate desuccinylase (348 aa).

Residues His67, Glu70, and His164 each coordinate Zn(2+). Glu228 is an active-site residue.

This sequence belongs to the AspA/AstE family. Succinylglutamate desuccinylase subfamily. The cofactor is Zn(2+).

The catalysed reaction is N-succinyl-L-glutamate + H2O = L-glutamate + succinate. The protein operates within amino-acid degradation; L-arginine degradation via AST pathway; L-glutamate and succinate from L-arginine: step 5/5. Its function is as follows. Transforms N(2)-succinylglutamate into succinate and glutamate. This chain is Succinylglutamate desuccinylase, found in Shewanella denitrificans (strain OS217 / ATCC BAA-1090 / DSM 15013).